Consider the following 412-residue polypeptide: Tryptophan synthase beta chain (412 aa).

Lys-92 is subject to N6-(pyridoxal phosphate)lysine.

The protein belongs to the TrpB family. As to quaternary structure, tetramer of two alpha and two beta chains. Pyridoxal 5'-phosphate serves as cofactor.

It catalyses the reaction (1S,2R)-1-C-(indol-3-yl)glycerol 3-phosphate + L-serine = D-glyceraldehyde 3-phosphate + L-tryptophan + H2O. It participates in amino-acid biosynthesis; L-tryptophan biosynthesis; L-tryptophan from chorismate: step 5/5. Its function is as follows. The beta subunit is responsible for the synthesis of L-tryptophan from indole and L-serine. The sequence is that of Tryptophan synthase beta chain from Methylibium petroleiphilum (strain ATCC BAA-1232 / LMG 22953 / PM1).